We begin with the raw amino-acid sequence, 628 residues long: MTELDYSKIGLKVGLEIHQQLNTAHKLFCECPTTLHEEYHTQLERYLRPSFSELGEIDIAALFEWQKGKKYVYRVPPNSCLVECDEEPPHIIDEEALSIAVAVSLALHSTLVDEVYVMRKIVIDGSNTSGFQRTAIISLGGYIEDNGQRIGIQTIALEEDAARKITDSPTEIIYNLDRLGIPLIEISTAPDIKTPEQAERVALKIGQLLRLTGRVKRGIGTIRQDLNVSIQGGVKTEIKGVQLLELIPDIIKNEARRQYELLRIKEELQKRNLNKDIVKNSFKIVDLTEEFKDTNSKIIRKELEKNGRIYGLKIAGFKGIFGWQLMPNRRFGTEVADYVRALAGLGGLFHSDELPNYGITKEEVEKVRKILQINENDAFIIIVGPKEKLDIATNTILDRILYAFDGVPKETRAALDDGTTKFMRPQPGSARMYPETDIPPRRIDERILELSKQFVPEQPEIKLKKLIELGLSKDLANTMLNSLRLDLFEELVKKYSPKVSPTFIASTLEITVKYVKSKGGDISVITDNILEELIKYVYEDKISKDAVQEILLELATSKTQLNEIIKKYTPLNETELEKIIIETIEENKKEIENKKDKAFNIIMSKVMNKVRGRADSKKVIELIKKHLG.

The protein belongs to the GatB/GatE family. GatE subfamily. In terms of assembly, heterodimer of GatD and GatE.

The catalysed reaction is L-glutamyl-tRNA(Gln) + L-glutamine + ATP + H2O = L-glutaminyl-tRNA(Gln) + L-glutamate + ADP + phosphate + H(+). Functionally, allows the formation of correctly charged Gln-tRNA(Gln) through the transamidation of misacylated Glu-tRNA(Gln) in organisms which lack glutaminyl-tRNA synthetase. The reaction takes place in the presence of glutamine and ATP through an activated gamma-phospho-Glu-tRNA(Gln). The GatDE system is specific for glutamate and does not act on aspartate. This Sulfurisphaera tokodaii (strain DSM 16993 / JCM 10545 / NBRC 100140 / 7) (Sulfolobus tokodaii) protein is Glutamyl-tRNA(Gln) amidotransferase subunit E.